The chain runs to 124 residues: Small ribosomal subunit protein uS12 (124 aa).

D89 is modified (3-methylthioaspartic acid). A disordered region spans residues T105–K124.

Belongs to the universal ribosomal protein uS12 family. As to quaternary structure, part of the 30S ribosomal subunit. Contacts proteins S8 and S17. May interact with IF1 in the 30S initiation complex.

With S4 and S5 plays an important role in translational accuracy. Its function is as follows. Interacts with and stabilizes bases of the 16S rRNA that are involved in tRNA selection in the A site and with the mRNA backbone. Located at the interface of the 30S and 50S subunits, it traverses the body of the 30S subunit contacting proteins on the other side and probably holding the rRNA structure together. The combined cluster of proteins S8, S12 and S17 appears to hold together the shoulder and platform of the 30S subunit. The sequence is that of Small ribosomal subunit protein uS12 from Vesicomyosocius okutanii subsp. Calyptogena okutanii (strain HA).